The sequence spans 262 residues: F-actin-capping protein subunit alpha (262 aa).

This sequence belongs to the F-actin-capping protein alpha subunit family. As to quaternary structure, heterodimer of an alpha and a beta subunit.

The protein resides in the cytoplasm. Its subcellular location is the cytoskeleton. In terms of biological role, F-actin-capping proteins bind in a Ca(2+)-independent manner to the fast growing ends of actin filaments (barbed end) thereby blocking the exchange of subunits at these ends. Unlike other capping proteins (such as gelsolin and severin), these proteins do not sever actin filaments. The sequence is that of F-actin-capping protein subunit alpha (CAP1) from Yarrowia lipolytica (strain CLIB 122 / E 150) (Yeast).